A 522-amino-acid polypeptide reads, in one-letter code: Apolipoprotein N-acyltransferase (522 aa).

6 helical membrane-spanning segments follow: residues 17-37 (YFTY…FSPF), 61-81 (TALL…VSWL), 98-118 (FLVG…TYLV), 127-147 (VIFA…FTGF), 164-184 (IAPI…SAVI), and 197-217 (LKLV…SAYS). Positions 236 to 483 (AQGNIEQNLK…ETTLTYKIAP (248 aa)) constitute a CN hydrolase domain. Glu-276 acts as the Proton acceptor in catalysis. Lys-342 is a catalytic residue. Residue Cys-394 is the Nucleophile of the active site. Residues 495–515 (NMPLYALSLLFLLLHSMMAFI) form a helical membrane-spanning segment.

This sequence belongs to the CN hydrolase family. Apolipoprotein N-acyltransferase subfamily.

It is found in the cell inner membrane. The catalysed reaction is N-terminal S-1,2-diacyl-sn-glyceryl-L-cysteinyl-[lipoprotein] + a glycerophospholipid = N-acyl-S-1,2-diacyl-sn-glyceryl-L-cysteinyl-[lipoprotein] + a 2-acyl-sn-glycero-3-phospholipid + H(+). The protein operates within protein modification; lipoprotein biosynthesis (N-acyl transfer). Functionally, catalyzes the phospholipid dependent N-acylation of the N-terminal cysteine of apolipoprotein, the last step in lipoprotein maturation. The chain is Apolipoprotein N-acyltransferase from Haemophilus influenzae (strain ATCC 51907 / DSM 11121 / KW20 / Rd).